The primary structure comprises 371 residues: Envelope glycoprotein M (371 aa).

At 1–13 (MAPSHVDKVNTRT) the chain is on the intravirion side. Residues 14–34 (WSASIVFMVLTFVNVSVHLVL) form a helical membrane-spanning segment. Residues 35 to 79 (SNFPHLGYPCVYYHVVDFERLNMSAYNVMHLHTPMLFLDSVQLVC) are Virion surface-facing. A helical membrane pass occupies residues 80–100 (YAVFMQLVFLAVTIYYLVCWI). The Intravirion portion of the chain corresponds to 101–126 (KISMRKDKGMSLNQSTRDISYMGDSL). The chain crosses the membrane as a helical span at residues 127 to 147 (TAFLFILSMDTFQLFTLTMSF). The Virion surface segment spans residues 148 to 151 (RLPS). Residues 152-172 (MIAFMAAVHFFCLTIFNVSMV) traverse the membrane as a helical segment. Over 173-200 (TQYRSYKRSLFFFSRLHPKLKGTVQFRT) the chain is Intravirion. The chain crosses the membrane as a helical span at residues 201–221 (LIVNLVEVALGFNTTVVAMAL). Topologically, residues 222–239 (CYGFGNNFFVRTGHMVLA) are virion surface. Residues 240–260 (VFVVYAIISIIYFLLIEAVFF) form a helical membrane-spanning segment. Over 261-264 (QYVK) the chain is Intravirion. The chain crosses the membrane as a helical span at residues 265–285 (VQFGYHLGAFFGLCGLIYPIV). At 286-298 (QYDTFLSNEYRTG) the chain is on the virion surface side. Residues 299 to 319 (ISWSFGMLFFIWAMFTTCRAV) traverse the membrane as a helical segment. The Intravirion segment spans residues 320-371 (RYFRGRGSGSVKYQALATASGEEVAALSHHDSLESRRLREEEDDDDEDFEDA). Residues 346 to 371 (LSHHDSLESRRLREEEDDDDEDFEDA) form a disordered region. Positions 347 to 359 (SHHDSLESRRLRE) are enriched in basic and acidic residues. The span at 360–371 (EEDDDDEDFEDA) shows a compositional bias: acidic residues.

The protein belongs to the herpesviridae glycoprotein M family. In terms of assembly, interacts (via N-terminus) with gN (via N-terminus). The gM-gN heterodimer forms the gCII complex.

The protein resides in the virion membrane. It localises to the host Golgi apparatus. Its subcellular location is the host trans-Golgi network. It is found in the host endosome membrane. The protein localises to the host nucleus inner membrane. Functionally, envelope glycoprotein important for virion assembly and egress. Plays a role in the correct incorporation of gH-gL into virion membrane. Directs the glycoprotein N (gN) to the host trans-Golgi network. The polypeptide is Envelope glycoprotein M (Homo sapiens (Human)).